A 290-amino-acid polypeptide reads, in one-letter code: Small ribosomal subunit protein uS11 (290 aa).

The segment at 243 to 271 (DWEAAPAGFPATGEWSDAAPGAAAPNWDA) is disordered. Positions 257 to 271 (WSDAAPGAAAPNWDA) are enriched in low complexity.

Belongs to the universal ribosomal protein uS2 family. As to quaternary structure, component of the small ribosomal subunit (SSU). Mature N.crassa ribosomes consist of a small (40S) and a large (60S) subunit. The 40S small subunit contains 1 molecule of ribosomal RNA (18S rRNA) and at least 32 different proteins. The large 60S subunit contains 3 rRNA molecules (26S, 5.8S and 5S rRNA) and at least 42 different proteins. Interacts with rps21.

Its subcellular location is the cytoplasm. Its function is as follows. Component of the ribosome, a large ribonucleoprotein complex responsible for the synthesis of proteins in the cell. The small ribosomal subunit (SSU) binds messenger RNAs (mRNAs) and translates the encoded message by selecting cognate aminoacyl-transfer RNA (tRNA) molecules. The large subunit (LSU) contains the ribosomal catalytic site termed the peptidyl transferase center (PTC), which catalyzes the formation of peptide bonds, thereby polymerizing the amino acids delivered by tRNAs into a polypeptide chain. The nascent polypeptides leave the ribosome through a tunnel in the LSU and interact with protein factors that function in enzymatic processing, targeting, and the membrane insertion of nascent chains at the exit of the ribosomal tunnel. uS2 is required for the assembly and/or stability of the 40S ribosomal subunit. Required for the processing of the 20S rRNA-precursor to mature 18S rRNA in a late step of the maturation of 40S ribosomal subunits. This is Small ribosomal subunit protein uS11 from Neurospora crassa (strain ATCC 24698 / 74-OR23-1A / CBS 708.71 / DSM 1257 / FGSC 987).